Here is a 323-residue protein sequence, read N- to C-terminus: Large ribosomal subunit protein uL10 (323 aa).

Residues 298–323 form a disordered region; the sequence is AAAAPAAAAEPEEEDDDDDFGMGALF. The segment covering 307 to 317 has biased composition (acidic residues); the sequence is EPEEEDDDDDF.

This sequence belongs to the universal ribosomal protein uL10 family. P0 forms a pentameric complex by interaction with dimers of P1 and P2. Phosphorylated.

Ribosomal protein P0 is the functional equivalent of E.coli protein L10. The protein is Large ribosomal subunit protein uL10 of Trypanosoma cruzi.